The following is a 590-amino-acid chain: Cell division protein FtsZ 1 (590 aa).

GTP is bound by residues 24-28, 111-113, Glu142, Arg146, and Asp190; these read GGGGN and GTG. Disordered stretches follow at residues 346–372 and 524–590; these read AAVPAQPQPTVSLQPVPQPQPVQQPLQ and EATN…RQSS. Residues 534–546 show a composition bias toward low complexity; it reads AAAPSAASQQRRP. The segment covering 559–576 has biased composition (basic and acidic residues); that stretch reads GQLDDHGRAAPQMRSHED.

Belongs to the FtsZ family. Homodimer. Polymerizes to form a dynamic ring structure in a strictly GTP-dependent manner. Interacts directly with several other division proteins.

The protein localises to the cytoplasm. Functionally, essential cell division protein that forms a contractile ring structure (Z ring) at the future cell division site. The regulation of the ring assembly controls the timing and the location of cell division. One of the functions of the FtsZ ring is to recruit other cell division proteins to the septum to produce a new cell wall between the dividing cells. Binds GTP and shows GTPase activity. The sequence is that of Cell division protein FtsZ 1 from Rhizobium meliloti (strain 1021) (Ensifer meliloti).